We begin with the raw amino-acid sequence, 391 residues long: Serine acetyltransferase 3, mitochondrial (391 aa).

Disordered stretches follow at residues 40 to 82 (KHHT…HDDE) and 353 to 375 (VGNPARLLGGKDNPKTHDKIPGL). The segment covering 45-56 (SPPPSPPPPPPM) has biased composition (pro residues).

This sequence belongs to the transferase hexapeptide repeat family. As to quaternary structure, homomultimer. Interacts with OASC. Component of the cysteine synthase complex (CSC) composed of two OAS-TL dimers and one SAT hexamer. Ubiquitous with higher levels in leaves and siliques. Localized in vascular tissues, particularly in phloem.

Its subcellular location is the mitochondrion. The enzyme catalyses L-serine + acetyl-CoA = O-acetyl-L-serine + CoA. Its pathway is amino-acid biosynthesis; L-cysteine biosynthesis; L-cysteine from L-serine: step 1/2. This Arabidopsis thaliana (Mouse-ear cress) protein is Serine acetyltransferase 3, mitochondrial (SAT3).